A 174-amino-acid polypeptide reads, in one-letter code: CEN-like protein 1 (174 aa).

Belongs to the phosphatidylethanolamine-binding protein family. As to expression, expressed in vegetative axillary meristems but not in the main shoot meristem.

It is found in the cytoplasm. In terms of biological role, may form complexes with phosphorylated ligands by interfering with kinases and their effectors. In Nicotiana tabacum (Common tobacco), this protein is CEN-like protein 1 (CET1).